The primary structure comprises 805 residues: Phenylalanine--tRNA ligase beta subunit (805 aa).

In terms of domain architecture, tRNA-binding spans 39 to 148 (APPFTGVVVT…AALRPGTDIR (110 aa)). The B5 domain occupies 399–474 (PVREPVRMRL…RVYGFERIPD (76 aa)). Mg(2+) contacts are provided by aspartate 452, aspartate 458, glutamate 461, and glutamate 462. Residues 703–804 (SRQPVVVRDL…LVAAHNARQR (102 aa)) enclose the FDX-ACB domain.

Belongs to the phenylalanyl-tRNA synthetase beta subunit family. Type 1 subfamily. As to quaternary structure, tetramer of two alpha and two beta subunits. The cofactor is Mg(2+).

Its subcellular location is the cytoplasm. The enzyme catalyses tRNA(Phe) + L-phenylalanine + ATP = L-phenylalanyl-tRNA(Phe) + AMP + diphosphate + H(+). This is Phenylalanine--tRNA ligase beta subunit from Bordetella pertussis (strain Tohama I / ATCC BAA-589 / NCTC 13251).